Reading from the N-terminus, the 328-residue chain is D-cysteine desulfhydrase (328 aa).

Lys51 is subject to N6-(pyridoxal phosphate)lysine.

Belongs to the ACC deaminase/D-cysteine desulfhydrase family. Homodimer. Requires pyridoxal 5'-phosphate as cofactor.

The enzyme catalyses D-cysteine + H2O = hydrogen sulfide + pyruvate + NH4(+) + H(+). Its function is as follows. Catalyzes the alpha,beta-elimination reaction of D-cysteine and of several D-cysteine derivatives. It could be a defense mechanism against D-cysteine. The polypeptide is D-cysteine desulfhydrase (Shigella flexneri serotype 5b (strain 8401)).